We begin with the raw amino-acid sequence, 274 residues long: Cytochrome b-c1 complex subunit Rieske, mitochondrial (274 aa).

The Mitochondrial matrix segment spans residues 79–103; that stretch reads SHTDVKVPDFYDYRRLEVLDSTKSS. The helical transmembrane segment at 104–140 threads the bilayer; sequence RESSEARKGFSYLVTAVTTVGVAYAAKNAVTQFISSM. Residues 141–274 lie on the Mitochondrial intermembrane side of the membrane; it reads SASADVLAMA…FTSDDMVVVG (134 aa). Positions 187 to 272 constitute a Rieske domain; the sequence is EAAVELSQLR…YEFTSDDMVV (86 aa). Positions 217, 219, 236, 239, and 241 each coordinate [2Fe-2S] cluster. C222 and C238 are oxidised to a cystine.

The protein belongs to the Rieske iron-sulfur protein family. As to quaternary structure, component of the ubiquinol-cytochrome c oxidoreductase (cytochrome b-c1 complex, complex III, CIII), a multisubunit enzyme composed of 11 subunits. The complex is composed of 3 respiratory subunits cytochrome b, cytochrome c1 and Rieske protein UQCRFS1, 2 core protein subunits UQCRC1/QCR1 and UQCRC2/QCR2, and 6 low-molecular weight protein subunits UQCRH/QCR6, UQCRB/QCR7, UQCRQ/QCR8, UQCR10/QCR9, UQCR11/QCR10 and subunit 9, the cleavage product of Rieske protein UQCRFS1. The complex exists as an obligatory dimer and forms supercomplexes (SCs) in the inner mitochondrial membrane with NADH-ubiquinone oxidoreductase (complex I, CI) and cytochrome c oxidase (complex IV, CIV), resulting in different assemblies (supercomplex SCI(1)III(2)IV(1) and megacomplex MCI(2)III(2)IV(2)). Incorporation of the Rieske protein UQCRFS1 is the penultimate step in complex III assembly. Interacts with TTC19, which is involved in the clearance of UQCRFS1 fragments. In terms of assembly, component of the ubiquinol-cytochrome c oxidoreductase (cytochrome b-c1 complex, complex III, CIII). Subunit 9 corresponds to the mitochondrial targeting sequence (MTS) of Rieske protein UQCRFS1. It is retained after processing and incorporated inside complex III, where it remains bound to the complex and localizes between the 2 core subunits UQCRC1/QCR1 and UQCRC2/QCR2. It depends on [2Fe-2S] cluster as a cofactor. Post-translationally, proteolytic processing is necessary for the correct insertion of UQCRFS1 in the complex III dimer. Several fragments are generated during UQCRFS1 insertion, most probably due to the endogenous matrix-processing peptidase (MPP) activity of the 2 core protein subunits UQCRC1/QCR1 and UQCRC2/QCR2, which are homologous to the 2 mitochondrial-processing peptidase (MPP) subunits beta-MPP and alpha-MPP respectively. The action of the protease is also necessary for the clearance of the UQCRFS1 fragments.

It localises to the mitochondrion inner membrane. The enzyme catalyses a quinol + 2 Fe(III)-[cytochrome c](out) = a quinone + 2 Fe(II)-[cytochrome c](out) + 2 H(+)(out). Functionally, component of the ubiquinol-cytochrome c oxidoreductase, a multisubunit transmembrane complex that is part of the mitochondrial electron transport chain which drives oxidative phosphorylation. The respiratory chain contains 3 multisubunit complexes succinate dehydrogenase (complex II, CII), ubiquinol-cytochrome c oxidoreductase (cytochrome b-c1 complex, complex III, CIII) and cytochrome c oxidase (complex IV, CIV), that cooperate to transfer electrons derived from NADH and succinate to molecular oxygen, creating an electrochemical gradient over the inner membrane that drives transmembrane transport and the ATP synthase. The cytochrome b-c1 complex catalyzes electron transfer from ubiquinol to cytochrome c, linking this redox reaction to translocation of protons across the mitochondrial inner membrane, with protons being carried across the membrane as hydrogens on the quinol. In the process called Q cycle, 2 protons are consumed from the matrix, 4 protons are released into the intermembrane space and 2 electrons are passed to cytochrome c. The Rieske protein is a catalytic core subunit containing a [2Fe-2S] iron-sulfur cluster. It cycles between 2 conformational states during catalysis to transfer electrons from the quinol bound in the Q(0) site in cytochrome b to cytochrome c1. Incorporation of UQCRFS1 is the penultimate step in complex III assembly. In terms of biological role, component of the ubiquinol-cytochrome c oxidoreductase (cytochrome b-c1 complex, complex III, CIII). UQCRFS1 undergoes proteolytic processing once it is incorporated in the complex III dimer. One of the fragments, called subunit 9, corresponds to its mitochondrial targeting sequence (MTS). The proteolytic processing is necessary for the correct insertion of UQCRFS1 in the complex III dimer, but the persistence of UQCRFS1-derived fragments may prevent newly imported UQCRFS1 to be processed and assembled into complex III and is detrimental for the complex III structure and function. This Theropithecus gelada (Gelada baboon) protein is Cytochrome b-c1 complex subunit Rieske, mitochondrial (UQCRFS1).